Here is a 109-residue protein sequence, read N- to C-terminus: Large ribosomal subunit protein uL22 (109 aa).

It belongs to the universal ribosomal protein uL22 family. As to quaternary structure, part of the 50S ribosomal subunit.

Functionally, this protein binds specifically to 23S rRNA; its binding is stimulated by other ribosomal proteins, e.g. L4, L17, and L20. It is important during the early stages of 50S assembly. It makes multiple contacts with different domains of the 23S rRNA in the assembled 50S subunit and ribosome. The globular domain of the protein is located near the polypeptide exit tunnel on the outside of the subunit, while an extended beta-hairpin is found that lines the wall of the exit tunnel in the center of the 70S ribosome. This Thiobacillus denitrificans (strain ATCC 25259 / T1) protein is Large ribosomal subunit protein uL22.